The following is a 327-amino-acid chain: GMP reductase (327 aa).

The active-site Thioimidate intermediate is cysteine 176. Residue 205 to 228 (IIADGGIRTHGDIVKSIRFGATMV) participates in NADP(+) binding.

This sequence belongs to the IMPDH/GMPR family. GuaC type 2 subfamily.

The enzyme catalyses IMP + NH4(+) + NADP(+) = GMP + NADPH + 2 H(+). Its function is as follows. Catalyzes the irreversible NADPH-dependent deamination of GMP to IMP. It functions in the conversion of nucleobase, nucleoside and nucleotide derivatives of G to A nucleotides, and in maintaining the intracellular balance of A and G nucleotides. This chain is GMP reductase, found in Helicobacter pylori (strain ATCC 700392 / 26695) (Campylobacter pylori).